The chain runs to 137 residues: Large ribosomal subunit protein uL16 (137 aa).

It belongs to the universal ribosomal protein uL16 family. As to quaternary structure, part of the 50S ribosomal subunit.

Its function is as follows. Binds 23S rRNA and is also seen to make contacts with the A and possibly P site tRNAs. The sequence is that of Large ribosomal subunit protein uL16 from Leuconostoc citreum (strain KM20).